A 490-amino-acid polypeptide reads, in one-letter code: AP-5 complex subunit mu-1 (490 aa).

The 271-residue stretch at 206–476 (KAQISISITE…LISSDYYIWN (271 aa)) folds into the MHD domain.

The protein belongs to the adaptor complexes medium subunit family. In terms of assembly, probably part of the adaptor protein complex 5 (AP-5) a tetramer composed of AP5B1, AP5M1, AP5S1 and AP5Z1. In terms of tissue distribution, widely expressed, including in small intestine and testis. In small intestine, highly expressed in cytoplasm of villi epithelial cells and internal glands. In testis, selectively expressed in maturing sperm cells (at protein level).

Its subcellular location is the cytoplasm. The protein resides in the cytosol. It is found in the late endosome membrane. It localises to the lysosome membrane. In terms of biological role, as part of AP-5, a probable fifth adaptor protein complex it may be involved in endosomal transport. The chain is AP-5 complex subunit mu-1 (Ap5m1) from Mus musculus (Mouse).